A 168-amino-acid chain; its full sequence is Photosystem I assembly protein Ycf3 (168 aa).

TPR repeat units lie at residues A35–P68, S72–L105, and G120–N153.

This sequence belongs to the Ycf3 family.

Its subcellular location is the plastid. The protein localises to the chloroplast thylakoid membrane. In terms of biological role, essential for the assembly of the photosystem I (PSI) complex. May act as a chaperone-like factor to guide the assembly of the PSI subunits. In Solanum lycopersicum (Tomato), this protein is Photosystem I assembly protein Ycf3.